The primary structure comprises 363 residues: LIM and cysteine-rich domains protein 1 (363 aa).

Position 16 is a phosphoserine (Ser16). In terms of domain architecture, PET spans 99 to 206 (MIMTNPIATG…GEVALPGQGG (108 aa)). Residues 200 to 233 (ALPGQGGLPKEEGKQQEKPEGAETAAPTANGSLG) form a disordered region. The span at 208 to 220 (PKEEGKQQEKPEG) shows a compositional bias: basic and acidic residues. LIM zinc-binding domains lie at 239–304 (YVCE…SLRP) and 305–363 (RCSG…SKRT).

Interacts with beta-dystroglycan. Interacts with GATA1, GATA4 and GATA6. Highly expressed in both skeletal muscle and cardiac muscle.

It localises to the cytoplasm. The protein resides in the nucleus. Functionally, transcriptional cofactor that restricts GATA6 function by inhibiting DNA-binding, resulting in repression of GATA6 transcriptional activation of downstream target genes. Represses GATA6-mediated trans activation of lung- and cardiac tissue-specific promoters. Inhibits DNA-binding by GATA4 and GATA1 to the cTNC promoter. Plays a critical role in the development of cardiac hypertrophy via activation of calcineurin/nuclear factor of activated T-cells signaling pathway. The sequence is that of LIM and cysteine-rich domains protein 1 (LMCD1) from Sus scrofa (Pig).